We begin with the raw amino-acid sequence, 268 residues long: Shikimate dehydrogenase (NADP(+)) (268 aa).

Residues 13–15 (SLS) and Thr-60 each bind shikimate. Residue Lys-64 is the Proton acceptor of the active site. Glu-76 contacts NADP(+). 2 residues coordinate shikimate: Asn-85 and Asp-100. NADP(+) is bound by residues 124-128 (GAGGA), 148-153 (NRTMAR), and Ile-209. Tyr-211 is a shikimate binding site. An NADP(+)-binding site is contributed by Gly-232.

This sequence belongs to the shikimate dehydrogenase family. In terms of assembly, homodimer.

It catalyses the reaction shikimate + NADP(+) = 3-dehydroshikimate + NADPH + H(+). It functions in the pathway metabolic intermediate biosynthesis; chorismate biosynthesis; chorismate from D-erythrose 4-phosphate and phosphoenolpyruvate: step 4/7. In terms of biological role, involved in the biosynthesis of the chorismate, which leads to the biosynthesis of aromatic amino acids. Catalyzes the reversible NADPH linked reduction of 3-dehydroshikimate (DHSA) to yield shikimate (SA). This chain is Shikimate dehydrogenase (NADP(+)), found in Staphylococcus aureus (strain MSSA476).